The primary structure comprises 38 residues: Antifungal protein 5 (38 aa).

It belongs to the plant LTP family.

Possesses potent antifungal activity against F.graminearum but not P.infestans. The chain is Antifungal protein 5 from Malva parviflora (Little mallow).